The primary structure comprises 307 residues: MTTSPTPFKTVRDLVRHAVSRFSQAKLAFGHGSDNAFDEAVYLVLHTLHLPLDTLEPFLDARLAPDEIDAVLAVIERRATERVPAAYLTREAWMHGHRFYVDERVIVPRSFIGELLDDGLQPYVEDPELVGSVLELCTGSGCLAILAALAFPNASVDAVDLSADALAVAKINRDNYGLDERIALYHGDLYAPLPQFKWIDPAQRYDVIIANPPYVNAGSMAELPAEYRHEPEMALAGGADGMDIVRRIIGEARRWLQDDGVLVVEIGNERANVEAAFGGLELVWLPTSAGDGSVFLIHASELPAVAG.

This sequence belongs to the protein N5-glutamine methyltransferase family. PrmB subfamily.

The catalysed reaction is L-glutaminyl-[ribosomal protein uL3] + S-adenosyl-L-methionine = N(5)-methyl-L-glutaminyl-[ribosomal protein uL3] + S-adenosyl-L-homocysteine + H(+). Its function is as follows. Methylates large ribosomal subunit protein uL3 on a specific glutamine residue. This Burkholderia pseudomallei (strain K96243) protein is Ribosomal protein uL3 glutamine methyltransferase.